Consider the following 128-residue polypeptide: Myelin basic protein (128 aa).

Disordered regions lie at residues 1-24 and 82-128; these read AGGAHFFGQEGSRKVPEKGKEPAT and TDGQ…PARR. Composition is skewed to basic and acidic residues over residues 11-23 and 96-107; these read GSRKVPEKGKEPA and KSREAYRGRKDG.

It belongs to the myelin basic protein family. In terms of processing, the N-terminus is blocked.

It is found in the myelin membrane. In terms of biological role, this protein may function to maintain proper structure of myelin. The sequence is that of Myelin basic protein (MBP) from Carcharhinus obscurus (Dusky shark).